Here is a 221-residue protein sequence, read N- to C-terminus: Putative N-acetylmannosamine-6-phosphate 2-epimerase (221 aa).

It belongs to the NanE family.

It catalyses the reaction an N-acyl-D-glucosamine 6-phosphate = an N-acyl-D-mannosamine 6-phosphate. It participates in amino-sugar metabolism; N-acetylneuraminate degradation; D-fructose 6-phosphate from N-acetylneuraminate: step 3/5. Its function is as follows. Converts N-acetylmannosamine-6-phosphate (ManNAc-6-P) to N-acetylglucosamine-6-phosphate (GlcNAc-6-P). The polypeptide is Putative N-acetylmannosamine-6-phosphate 2-epimerase (Clostridium perfringens (strain SM101 / Type A)).